The chain runs to 379 residues: Protein psi1 (379 aa).

The J domain occupies 1-70 (MVADTKLYDC…RKLYDQYGIT (70 aa)). Disordered stretches follow at residues 69-95 (ITEG…FPGA) and 176-205 (FGGG…AQNE). Over residues 81 to 95 (AEGGPGAGFGGFPGA) the composition is skewed to gly residues.

In terms of biological role, required for nuclear migration during mitosis. It is required for the normal initiation of translation. This is Protein psi1 (psi1) from Schizosaccharomyces pombe (strain 972 / ATCC 24843) (Fission yeast).